The primary structure comprises 266 residues: Phage-like element PBSX protein XkdC (266 aa).

ATP is bound at residue 124-131 (GQPGSGKT).

To B.subtilis YqaM.

In terms of biological role, may function as a transcriptional antiterminator. The protein is Phage-like element PBSX protein XkdC (xkdC) of Bacillus subtilis (strain 168).